The primary structure comprises 168 residues: Large ribosomal subunit protein uL10 (168 aa).

It belongs to the universal ribosomal protein uL10 family. In terms of assembly, part of the ribosomal stalk of the 50S ribosomal subunit. The N-terminus interacts with L11 and the large rRNA to form the base of the stalk. The C-terminus forms an elongated spine to which L12 dimers bind in a sequential fashion forming a multimeric L10(L12)X complex.

In terms of biological role, forms part of the ribosomal stalk, playing a central role in the interaction of the ribosome with GTP-bound translation factors. The polypeptide is Large ribosomal subunit protein uL10 (Acinetobacter baumannii (strain AB307-0294)).